The following is a 203-amino-acid chain: Cilia- and flagella-associated protein 20 (203 aa).

The protein belongs to the CFAP20 family.

The protein resides in the nucleus. It is found in the cytoplasm. Its subcellular location is the cytoskeleton. It localises to the microtubule organizing center. The protein localises to the centrosome. The protein resides in the centriole. It is found in the cilium basal body. Its subcellular location is the cilium axoneme. In terms of biological role, cilium- and flagellum-specific protein that plays a role in axonemal structure organization and motility. Microtubule inner protein (MIP) part of the dynein-decorated doublet microtubules (DMTs) in cilia axoneme, which is required for motile cilia beating. Involved in the regulation of the size and morphology of cilia. Required for axonemal microtubules polyglutamylation. This chain is Cilia- and flagella-associated protein 20, found in Caenorhabditis elegans.